Consider the following 136-residue polypeptide: Large ribosomal subunit protein uL16 (136 aa).

The protein belongs to the universal ribosomal protein uL16 family. As to quaternary structure, part of the 50S ribosomal subunit.

Its function is as follows. Binds 23S rRNA and is also seen to make contacts with the A and possibly P site tRNAs. In Erwinia tasmaniensis (strain DSM 17950 / CFBP 7177 / CIP 109463 / NCPPB 4357 / Et1/99), this protein is Large ribosomal subunit protein uL16.